Consider the following 254-residue polypeptide: tRNA (guanine-N(7)-)-methyltransferase (254 aa).

The interval 1 to 34 (MNTNTPAHPPEGAPLSEATQAALASAEHAPDSPG) is disordered. The S-adenosyl-L-methionine site is built by Glu-87, Glu-112, Asp-139, and Asp-162. Asp-162 is an active-site residue. Substrate-binding positions include Lys-166, Asp-198, and 233–236 (TKFE).

This sequence belongs to the class I-like SAM-binding methyltransferase superfamily. TrmB family.

It carries out the reaction guanosine(46) in tRNA + S-adenosyl-L-methionine = N(7)-methylguanosine(46) in tRNA + S-adenosyl-L-homocysteine. Its pathway is tRNA modification; N(7)-methylguanine-tRNA biosynthesis. Catalyzes the formation of N(7)-methylguanine at position 46 (m7G46) in tRNA. In Bordetella pertussis (strain Tohama I / ATCC BAA-589 / NCTC 13251), this protein is tRNA (guanine-N(7)-)-methyltransferase.